The following is a 178-amino-acid chain: Crossover junction endodeoxyribonuclease RuvC (178 aa).

Catalysis depends on residues aspartate 11, glutamate 71, and aspartate 143. Positions 11, 71, and 143 each coordinate Mg(2+).

The protein belongs to the RuvC family. As to quaternary structure, homodimer which binds Holliday junction (HJ) DNA. The HJ becomes 2-fold symmetrical on binding to RuvC with unstacked arms; it has a different conformation from HJ DNA in complex with RuvA. In the full resolvosome a probable DNA-RuvA(4)-RuvB(12)-RuvC(2) complex forms which resolves the HJ. Mg(2+) is required as a cofactor.

It localises to the cytoplasm. The enzyme catalyses Endonucleolytic cleavage at a junction such as a reciprocal single-stranded crossover between two homologous DNA duplexes (Holliday junction).. The RuvA-RuvB-RuvC complex processes Holliday junction (HJ) DNA during genetic recombination and DNA repair. Endonuclease that resolves HJ intermediates. Cleaves cruciform DNA by making single-stranded nicks across the HJ at symmetrical positions within the homologous arms, yielding a 5'-phosphate and a 3'-hydroxyl group; requires a central core of homology in the junction. The consensus cleavage sequence is 5'-(A/T)TT(C/G)-3'. Cleavage occurs on the 3'-side of the TT dinucleotide at the point of strand exchange. HJ branch migration catalyzed by RuvA-RuvB allows RuvC to scan DNA until it finds its consensus sequence, where it cleaves and resolves the cruciform DNA. The sequence is that of Crossover junction endodeoxyribonuclease RuvC from Neisseria meningitidis serogroup C / serotype 2a (strain ATCC 700532 / DSM 15464 / FAM18).